The sequence spans 102 residues: RNA-binding protein Hfq (102 aa).

One can recognise a Sm domain in the interval 9–68 (DPFLNALRRERVPVSIYLVNGIKLQGQIESFDQFVILLKNTVSQMVYKHAISTVVPSRPV). The interval 63 to 102 (VPSRPVSHHSNNAGGGSSNYHHGGSAQGSSAPQQDSDDAE) is disordered. Residues 70 to 86 (HHSNNAGGGSSNYHHGG) are compositionally biased toward low complexity.

The protein belongs to the Hfq family. Homohexamer.

RNA chaperone that binds small regulatory RNA (sRNAs) and mRNAs to facilitate mRNA translational regulation in response to envelope stress, environmental stress and changes in metabolite concentrations. Also binds with high specificity to tRNAs. The chain is RNA-binding protein Hfq from Klebsiella pneumoniae (strain 342).